A 298-amino-acid chain; its full sequence is N-acetylmuramic acid 6-phosphate etherase (298 aa).

Residues 54–217 (TIKAMKQGGR…STTVMIGLGK (164 aa)) enclose the SIS domain. The Proton donor role is filled by glutamate 82. Residue glutamate 113 is part of the active site.

Belongs to the GCKR-like family. MurNAc-6-P etherase subfamily. Homodimer.

It carries out the reaction N-acetyl-D-muramate 6-phosphate + H2O = N-acetyl-D-glucosamine 6-phosphate + (R)-lactate. The protein operates within amino-sugar metabolism; N-acetylmuramate degradation. Functionally, specifically catalyzes the cleavage of the D-lactyl ether substituent of MurNAc 6-phosphate, producing GlcNAc 6-phosphate and D-lactate. This is N-acetylmuramic acid 6-phosphate etherase from Halalkalibacterium halodurans (strain ATCC BAA-125 / DSM 18197 / FERM 7344 / JCM 9153 / C-125) (Bacillus halodurans).